A 353-amino-acid chain; its full sequence is N6-methyladenosine RNA demethylase ALKB1 (353 aa).

The Fe2OG dioxygenase domain occupies 223–352 (IAQAAIVNFY…RINLNVRQMR (130 aa)). Fe cation contacts are provided by H241, D243, and H308. R343 lines the 2-oxoglutarate pocket.

The protein belongs to the alkB family. Requires Fe(2+) as cofactor.

Its subcellular location is the cytoplasm. The protein resides in the P-body. It carries out the reaction an N(6)-methyladenosine in mRNA + 2-oxoglutarate + O2 = an adenosine in mRNA + formaldehyde + succinate + CO2. RNA demethylase that regulates the stability of mRNAs through an m(6)A-dependent manner. M6A is a modification present at internal sites of mRNAs and some non-coding RNAs and plays a role in mRNA stability and processing. Plays a role in pathogenicity towards plant host. This chain is N6-methyladenosine RNA demethylase ALKB1, found in Pyricularia oryzae (strain 70-15 / ATCC MYA-4617 / FGSC 8958) (Rice blast fungus).